A 375-amino-acid chain; its full sequence is Succinyl-diaminopimelate desuccinylase (375 aa).

His66 contributes to the Zn(2+) binding site. Asp68 is an active-site residue. Asp99 contacts Zn(2+). The active-site Proton acceptor is Glu133. Zn(2+) is bound by residues Glu134, Glu162, and His348.

Belongs to the peptidase M20A family. DapE subfamily. Homodimer. Zn(2+) serves as cofactor. It depends on Co(2+) as a cofactor.

It catalyses the reaction N-succinyl-(2S,6S)-2,6-diaminopimelate + H2O = (2S,6S)-2,6-diaminopimelate + succinate. Its pathway is amino-acid biosynthesis; L-lysine biosynthesis via DAP pathway; LL-2,6-diaminopimelate from (S)-tetrahydrodipicolinate (succinylase route): step 3/3. Its function is as follows. Catalyzes the hydrolysis of N-succinyl-L,L-diaminopimelic acid (SDAP), forming succinate and LL-2,6-diaminopimelate (DAP), an intermediate involved in the bacterial biosynthesis of lysine and meso-diaminopimelic acid, an essential component of bacterial cell walls. The polypeptide is Succinyl-diaminopimelate desuccinylase (Enterobacter sp. (strain 638)).